Reading from the N-terminus, the 397-residue chain is Phosphoglycerate kinase (397 aa).

Substrate contacts are provided by residues 26 to 28, Arg-42, 65 to 68, Arg-119, and Arg-152; these read DLN and HLGR. Residues Lys-203, Glu-325, and 351 to 354 each bind ATP; that span reads GGDT.

It belongs to the phosphoglycerate kinase family. Monomer.

It localises to the cytoplasm. The catalysed reaction is (2R)-3-phosphoglycerate + ATP = (2R)-3-phospho-glyceroyl phosphate + ADP. It functions in the pathway carbohydrate degradation; glycolysis; pyruvate from D-glyceraldehyde 3-phosphate: step 2/5. The protein is Phosphoglycerate kinase of Bordetella pertussis (strain Tohama I / ATCC BAA-589 / NCTC 13251).